Consider the following 210-residue polypeptide: Na(+)-translocating NADH-quinone reductase subunit D (210 aa).

The next 5 helical transmembrane spans lie at 42 to 62 (FVMT…ISLI), 72 to 92 (IIAQ…VLKA), 103 to 123 (VFVG…AYAM), 131 to 151 (FLDG…VATV), and 178 to 198 (NGLL…IWGV).

The protein belongs to the NqrDE/RnfAE family. Composed of six subunits; NqrA, NqrB, NqrC, NqrD, NqrE and NqrF.

The protein resides in the cell inner membrane. It carries out the reaction a ubiquinone + n Na(+)(in) + NADH + H(+) = a ubiquinol + n Na(+)(out) + NAD(+). Its function is as follows. NQR complex catalyzes the reduction of ubiquinone-1 to ubiquinol by two successive reactions, coupled with the transport of Na(+) ions from the cytoplasm to the periplasm. NqrA to NqrE are probably involved in the second step, the conversion of ubisemiquinone to ubiquinol. The polypeptide is Na(+)-translocating NADH-quinone reductase subunit D (Aeromonas hydrophila subsp. hydrophila (strain ATCC 7966 / DSM 30187 / BCRC 13018 / CCUG 14551 / JCM 1027 / KCTC 2358 / NCIMB 9240 / NCTC 8049)).